Here is a 177-residue protein sequence, read N- to C-terminus: CCHC-type zinc finger nucleic acid binding protein (177 aa).

The residue at position 2 (S2) is an N-acetylserine. A CCHC-type 1 zinc finger spans residues 4 to 21 (NECFKCGRSGHWARECPT). K8 carries the post-translational modification N6-acetyllysine. 2 positions are modified to omega-N-methylarginine; by PRMT1: R25 and R27. Positions 25–38 (RGRGMRSRGRGGFT) are RNA-binding Arg/Gly-rich region (RGG-box). R32 and R34 each carry omega-N-methylarginine. S49 carries the phosphoserine modification. 6 CCHC-type zinc fingers span residues 52–69 (DICY…DCDL), 72–89 (DACY…DCKE), 96–113 (QCCY…DCDH), 117–134 (QKCY…DCTK), 135–152 (VKCY…NCSK), and 156–173 (VNCY…ECTI). Omega-N-methylarginine occurs at positions 73, 79, and 80.

In terms of assembly, associates with the 40S ribosomal subunit, the 80S ribosome and with polysomes. Post-translationally, arginine methylation by PRMT1 in the Arg/Gly-rich region impedes RNA binding. In terms of tissue distribution, expressed in the liver, kidney, spleen, testis, lung, muscle and adrenal glands.

Its subcellular location is the nucleus. The protein resides in the cytoplasm. It localises to the endoplasmic reticulum. Single-stranded DNA-binding protein that preferentially binds to the sterol regulatory element (SRE) sequence 5'-GTGCGGTG-3', and thereby mediates transcriptional repression. Has a role as transactivator of the Myc promoter. Binds single-stranded RNA in a sequence-specific manner. In terms of biological role, binds G-rich elements in target mRNA coding sequences. Prevents G-quadruplex structure formation in vitro, suggesting a role in supporting translation by resolving stable structures on mRNAs. Functionally, binds to RNA. This Homo sapiens (Human) protein is CCHC-type zinc finger nucleic acid binding protein.